We begin with the raw amino-acid sequence, 311 residues long: Phospholipid phosphatase 3 (311 aa).

Residues 1–33 lie on the Cytoplasmic side of the membrane; the sequence is MQNYKYDKAIVPESKNGGSPALNNNPRRSGSKR. Phosphoserine is present on Ser19. The helical transmembrane segment at 34 to 54 threads the bilayer; sequence VLLICLDLFCLFMAGLPFLII. Residues 55–85 are Extracellular-facing; it reads ETSTIKPYHRGFYCNDESIKYPLKTGETIND. The helical transmembrane segment at 86–106 threads the bilayer; the sequence is AVLCAVGIVIAILAIITGEFY. The Cytoplasmic portion of the chain corresponds to 107 to 122; the sequence is RIYYLKKSRSTIQNPY. The Dityrosine basolateral targeting motif signature appears at 109–110; the sequence is YY. Residues 123–143 traverse the membrane as a helical segment; it reads VAALYKQVGCFLFGCAISQSF. Residues 144–193 lie on the Extracellular side of the membrane; that stretch reads TDIAKVSIGRLRPHFLSVCNPDFSQINCSEGYIQNYRCRGDDSKVQEARK. Residues 148–156 form a phosphatase sequence motif I region; that stretch reads KVSIGRLRP. An N-linked (GlcNAc...) asparagine glycan is attached at Asn170. The short motif at 182–184 is the Integrin-binding motif element; sequence RGD. A helical transmembrane segment spans residues 194 to 214; that stretch reads SFFSGHASFSMYTMLYLVLYL. The tract at residues 196-199 is phosphatase sequence motif II; the sequence is FSGH. The active-site Proton donors is the His199. Topologically, residues 215–225 are cytoplasmic; it reads QARFTWRGARL. A helical transmembrane segment spans residues 226 to 243; the sequence is LRPLLQFTLIMMAFYTGL. A phosphatase sequence motif III region spans residues 244–255; sequence SRVSDHKHHPSD. The Extracellular portion of the chain corresponds to 244 to 257; sequence SRVSDHKHHPSDVL. His251 acts as the Nucleophile in catalysis. Residues 258–278 traverse the membrane as a helical segment; that stretch reads AGFAQGALVACCIVFFVSDLF. A mediates interaction with CTNND1 region spans residues 275–311; that stretch reads SDLFKTKTTLSLPAPAIRKEILSPVDIIDRNNHHNMM. Residues 279 to 311 lie on the Cytoplasmic side of the membrane; sequence KTKTTLSLPAPAIRKEILSPVDIIDRNNHHNMM.

This sequence belongs to the PA-phosphatase related phosphoesterase family. As to quaternary structure, forms functional homodimers and homooligomers that are not required for substrate recognition and catalytic activity. Can also form heterooligomers with other PLPP2 and PLPP3. Interacts with CTNND1; negatively regulates the PLPP3-mediated stabilization of beta-catenin/CTNNB1. N-glycosylated. Contains high-mannose oligosaccharides. As to expression, ubiquitously expressed. Highly expressed in heart and placenta.

The protein localises to the cell membrane. It is found in the basolateral cell membrane. Its subcellular location is the endoplasmic reticulum membrane. It localises to the endoplasmic reticulum-Golgi intermediate compartment membrane. The protein resides in the golgi apparatus membrane. The protein localises to the golgi apparatus. It is found in the trans-Golgi network membrane. Its subcellular location is the membrane raft. The catalysed reaction is a 1,2-diacyl-sn-glycero-3-phosphate + H2O = a 1,2-diacyl-sn-glycerol + phosphate. It carries out the reaction 1,2-dihexadecanoyl-sn-glycero-3-phosphate + H2O = 1,2-dihexadecanoyl-sn-glycerol + phosphate. It catalyses the reaction 1,2-di-(9Z-octadecenoyl)-sn-glycero-3-phosphate + H2O = 1,2-di-(9Z-octadecenoyl)-sn-glycerol + phosphate. The enzyme catalyses a monoacyl-sn-glycero-3-phosphate + H2O = a monoacylglycerol + phosphate. The catalysed reaction is (9Z)-octadecenoyl-sn-glycero-3-phosphate + H2O = (9Z-octadecenoyl)-glycerol + phosphate. It carries out the reaction sphing-4-enine 1-phosphate + H2O = sphing-4-enine + phosphate. It catalyses the reaction an N-acylsphing-4-enine 1-phosphate + H2O = an N-acylsphing-4-enine + phosphate. The enzyme catalyses N-(octanoyl)-sphing-4-enine-1-phosphate + H2O = N-octanoylsphing-4-enine + phosphate. The catalysed reaction is N-(9Z-octadecenoyl)-ethanolamine phosphate + H2O = N-(9Z-octadecenoyl) ethanolamine + phosphate. Its pathway is lipid metabolism; phospholipid metabolism. With respect to regulation, magnesium-independent phospholipid phosphatase. Insensitive to N-ethylmaleimide. Inhibited by sphingosine, zinc ions and modestly by propanolol. Magnesium-independent phospholipid phosphatase of the plasma membrane that catalyzes the dephosphorylation of a variety of glycerolipid and sphingolipid phosphate esters including phosphatidate/PA, lysophosphatidate/LPA, diacylglycerol pyrophosphate/DGPP, sphingosine 1-phosphate/S1P and ceramide 1-phosphate/C1P. Also acts on N-oleoyl ethanolamine phosphate/N-(9Z-octadecenoyl)-ethanolamine phosphate, a potential physiological compound. Has both an extracellular and an intracellular phosphatase activity, allowing the hydrolysis and the cellular uptake of these bioactive lipid mediators from the milieu, regulating signal transduction in different cellular processes. Through the dephosphorylation of extracellular sphingosine-1-phosphate and the regulation of its extra- and intracellular availability, plays a role in vascular homeostasis, regulating endothelial cell migration, adhesion, survival, proliferation and the production of pro-inflammatory cytokines. By maintaining the appropriate levels of this lipid in the cerebellum, also ensure its proper development and function. Through its intracellular lipid phosphatase activity may act in early compartments of the secretory pathway, regulating the formation of Golgi to endoplasmic reticulum retrograde transport carriers. In terms of biological role, independently of this phosphatase activity may also function in the Wnt signaling pathway and the stabilization of beta-catenin/CTNNB1, thereby regulating cell proliferation, migration and differentiation in angiogenesis or yet in tumor growth. Also plays a role in integrin-mediated cell-cell adhesion in angiogenesis. This Homo sapiens (Human) protein is Phospholipid phosphatase 3.